A 240-amino-acid chain; its full sequence is Probable 2-phosphosulfolactate phosphatase (240 aa).

The protein belongs to the ComB family. Mg(2+) is required as a cofactor.

The catalysed reaction is (2R)-O-phospho-3-sulfolactate + H2O = (2R)-3-sulfolactate + phosphate. This is Probable 2-phosphosulfolactate phosphatase from Clostridium kluyveri (strain NBRC 12016).